The chain runs to 325 residues: Acetyl-coenzyme A carboxylase carboxyl transferase subunit alpha (325 aa).

Positions glutamate 43–glutamine 297 constitute a CoA carboxyltransferase C-terminal domain.

This sequence belongs to the AccA family. As to quaternary structure, acetyl-CoA carboxylase is a heterohexamer composed of biotin carboxyl carrier protein (AccB), biotin carboxylase (AccC) and two subunits each of ACCase subunit alpha (AccA) and ACCase subunit beta (AccD).

The protein resides in the cytoplasm. The enzyme catalyses N(6)-carboxybiotinyl-L-lysyl-[protein] + acetyl-CoA = N(6)-biotinyl-L-lysyl-[protein] + malonyl-CoA. Its pathway is lipid metabolism; malonyl-CoA biosynthesis; malonyl-CoA from acetyl-CoA: step 1/1. Functionally, component of the acetyl coenzyme A carboxylase (ACC) complex. First, biotin carboxylase catalyzes the carboxylation of biotin on its carrier protein (BCCP) and then the CO(2) group is transferred by the carboxyltransferase to acetyl-CoA to form malonyl-CoA. The sequence is that of Acetyl-coenzyme A carboxylase carboxyl transferase subunit alpha from Cyanothece sp. (strain PCC 7425 / ATCC 29141).